The chain runs to 847 residues: Endo-beta-N-acetylglucosaminidase EndoSd (847 aa).

The N-terminal stretch at 1 to 36 is a signal peptide; it reads MDKRLLVKRTLGCVCAATLMGAILATHHDSLISVKA. The region spanning 65–377 is the GH18 domain; the sequence is PLYAGYFRTW…HPVVDNISHT (313 aa). His-107 serves as a coordination point for a glycoprotein. Glu-186 functions as the Proton donor in the catalytic mechanism. A glycoprotein-binding residues include Glu-188, Gln-250, Tyr-252, Glu-288, Glu-289, Asn-295, and Tyr-339. LRR repeat units lie at residues 423–446, 447–470, 483–506, and 507–530; these read LERY…LEKL, SHLQ…ILPE, MTGL…DVNG, and LTHL…ADRK. A carbohydrate-binding module (CBM) region spans residues 683–836; it reads MENLAKGAKV…YTELQILGQR (154 aa). The Ca(2+) site is built by Lys-704, Asp-707, and Glu-829.

The protein belongs to the glycosyl hydrolase 18 family.

It localises to the secreted. The protein localises to the host extracellular space. It catalyses the reaction an N(4)-(oligosaccharide-(1-&gt;3)-[oligosaccharide-(1-&gt;6)]-beta-D-Man-(1-&gt;4)-beta-D-GlcNAc-(1-&gt;4)-alpha-D-GlcNAc)-L-asparaginyl-[protein] + H2O = an oligosaccharide-(1-&gt;3)-[oligosaccharide-(1-&gt;6)]-beta-D-Man-(1-&gt;4)-D-GlcNAc + N(4)-(N-acetyl-beta-D-glucosaminyl)-L-asparaginyl-[protein]. In terms of biological role, endoglucosidase that acts as a host immune evasion factor by mediating hydrolysis of the N-linked glycan from the Fc region of host immunoglobulin-gamma (IgG) during infection. Specifically catalyzes the hydrolysis of the beta-1,4 linkage between the first two N-acetylglucosamine residues of the complex-type N-linked glycan located on 'Asn-297' of the Fc region of IgG antibodies (IGHG1, IGHG2, IGHG3 or IGHG4), thereby preventing interaction between IgGs and Fc receptors and ability to activate the complement pathway. Shows a specificity for biantennary complex type N-glycans; does neither cleave larger complex type glycans nor oligomannose and nor hybrid-type glycans. Specifically acts on IgGs; does not act on immunoglobulin alpha, beta, delta or mu. The polypeptide is Endo-beta-N-acetylglucosaminidase EndoSd (Streptococcus dysgalactiae).